Here is a 356-residue protein sequence, read N- to C-terminus: 3-dehydroquinate synthase (356 aa).

NAD(+) contacts are provided by residues 71–76 (EGEASK), 105–109 (GVTGD), 129–130 (TS), K142, and K151. The Zn(2+) site is built by E184, H247, and H264.

It belongs to the sugar phosphate cyclases superfamily. Dehydroquinate synthase family. Co(2+) serves as cofactor. Requires Zn(2+) as cofactor. It depends on NAD(+) as a cofactor.

The protein resides in the cytoplasm. The enzyme catalyses 7-phospho-2-dehydro-3-deoxy-D-arabino-heptonate = 3-dehydroquinate + phosphate. It functions in the pathway metabolic intermediate biosynthesis; chorismate biosynthesis; chorismate from D-erythrose 4-phosphate and phosphoenolpyruvate: step 2/7. Functionally, catalyzes the conversion of 3-deoxy-D-arabino-heptulosonate 7-phosphate (DAHP) to dehydroquinate (DHQ). The protein is 3-dehydroquinate synthase of Lactococcus lactis subsp. cremoris (strain SK11).